Here is an 873-residue protein sequence, read N- to C-terminus: Alanine--tRNA ligase (873 aa).

His-562, His-566, Cys-663, and His-667 together coordinate Zn(2+).

Belongs to the class-II aminoacyl-tRNA synthetase family. Requires Zn(2+) as cofactor.

The protein localises to the cytoplasm. The enzyme catalyses tRNA(Ala) + L-alanine + ATP = L-alanyl-tRNA(Ala) + AMP + diphosphate. Its function is as follows. Catalyzes the attachment of alanine to tRNA(Ala) in a two-step reaction: alanine is first activated by ATP to form Ala-AMP and then transferred to the acceptor end of tRNA(Ala). Also edits incorrectly charged Ser-tRNA(Ala) and Gly-tRNA(Ala) via its editing domain. The protein is Alanine--tRNA ligase of Bordetella petrii (strain ATCC BAA-461 / DSM 12804 / CCUG 43448).